Reading from the N-terminus, the 337-residue chain is Anthranilate phosphoribosyltransferase (337 aa).

5-phospho-alpha-D-ribose 1-diphosphate-binding positions include Gly81, 84-85 (GD), Ser89, 91-94 (NVST), 109-117 (KHGNRAASS), and Ala121. Gly81 serves as a coordination point for anthranilate. Residue Ser93 coordinates Mg(2+). Residue Asn112 coordinates anthranilate. Residue Arg167 coordinates anthranilate. Residues Asp226 and Glu227 each contribute to the Mg(2+) site.

The protein belongs to the anthranilate phosphoribosyltransferase family. Homodimer. It depends on Mg(2+) as a cofactor.

It catalyses the reaction N-(5-phospho-beta-D-ribosyl)anthranilate + diphosphate = 5-phospho-alpha-D-ribose 1-diphosphate + anthranilate. Its pathway is amino-acid biosynthesis; L-tryptophan biosynthesis; L-tryptophan from chorismate: step 2/5. In terms of biological role, catalyzes the transfer of the phosphoribosyl group of 5-phosphorylribose-1-pyrophosphate (PRPP) to anthranilate to yield N-(5'-phosphoribosyl)-anthranilate (PRA). In Methylobacterium nodulans (strain LMG 21967 / CNCM I-2342 / ORS 2060), this protein is Anthranilate phosphoribosyltransferase.